Reading from the N-terminus, the 511-residue chain is Exodeoxyribonuclease 7 large subunit (511 aa).

Belongs to the XseA family. As to quaternary structure, heterooligomer composed of large and small subunits.

Its subcellular location is the cytoplasm. It catalyses the reaction Exonucleolytic cleavage in either 5'- to 3'- or 3'- to 5'-direction to yield nucleoside 5'-phosphates.. Bidirectionally degrades single-stranded DNA into large acid-insoluble oligonucleotides, which are then degraded further into small acid-soluble oligonucleotides. This Brucella canis (strain ATCC 23365 / NCTC 10854 / RM-666) protein is Exodeoxyribonuclease 7 large subunit.